The chain runs to 575 residues: MDPRGILKAFPKRKKIHADASSKVLAKIPRKEEGEEAEEWLSSLRAHVVRTGIGRARAELFEKQIVQHGGQLCPVQGPGVTHIVVDEGMDYERALRLLRLPRLPPGAQLVKSAWLSLCLQERRLVDVAGFSIFIPSKYLDQSQPSKAEQDASLPPGTHEALLQTALPPPPSPTRPVSPPQKTKEAPNTQAQPISDDEASDGEETQVSAADLEALISGHYPASLEGDCDPSPAPVVLDKWVCAQPSSQKATNHNLHITEKLEVLAKAYSVQGDKWRALGYAKAINALKSFHKPVTSYQEACSIPGIGKRMAEKIIEILESGHLRKLDHISESVPVLELFSNIWGAGTKTAQMWYQQGFRSLEDIRSQASLTTQQAIGLKHYNDFLERMPREEATEIEQTVQKAAQAFNSGLLCVACGSYRRGKATCGDVDVLITHPDGRSHRGIFSRLLDSLRQQGFLTDDLVSQEENGQQQKYLGVCRLPGPGWRHRRLDIIVVPYSEFACALLYFTGSAHFNRSMRALAKTKGMSLSEHALSTAVVRNTHGCKMGPGRVLPTPTEKDVFRLLGLPYREPAERDW.

One can recognise a BRCT domain in the interval 36–132 (EAEEWLSSLR…RLVDVAGFSI (97 aa)). A disordered region spans residues 160 to 205 (ALLQTALPPPPSPTRPVSPPQKTKEAPNTQAQPISDDEASDGEETQ). The segment covering 166–178 (LPPPPSPTRPVSP) has biased composition (pro residues). Residues 194–203 (SDDEASDGEE) show a composition bias toward acidic residues. The tract at residues 265 to 279 (KAYSVQGDKWRALGY) is DNA-binding. Residue Lys-312 is the Schiff-base intermediate with DNA of the active site. Residues 345-348 (GTKT) form a DNA-binding region. DCTP is bound by residues Arg-386, 417 to 420 (SYRR), and 426 to 429 (GDVD). The tract at residues 420–429 (RGKATCGDVD) is involved in primer binding. 3 residues coordinate Mn(2+): Asp-427, Asp-429, and Asp-490. Residues 466 to 505 (ENGQQQKYLGVCRLPGPGWRHRRLDIIVVPYSEFACALLY) are DNA-binding. Asn-513 is a binding site for dCTP.

The protein belongs to the DNA polymerase type-X family. Interacts with PCNA. Interacts with PAXX; promoting POLL recruitment to double-strand breaks (DSBs) and stimulation of the end-filling activity of POLL. Interacts with XRCC4; promoting POLL recruitment to double-strand breaks (DSBs) and stimulation of the end-filling activity of POLL. Interacts with NHEJ1/XLF; promoting POLL recruitment to double-strand breaks (DSBs) and stimulation of the end-filling activity of POLL. Mn(2+) serves as cofactor.

Its subcellular location is the nucleus. The catalysed reaction is DNA(n) + a 2'-deoxyribonucleoside 5'-triphosphate = DNA(n+1) + diphosphate. Its function is as follows. DNA polymerase that functions in several pathways of DNA repair. Involved in base excision repair (BER) responsible for repair of lesions that give rise to abasic (AP) sites in DNA. Also contributes to DNA double-strand break repair by non-homologous end joining and homologous recombination. Has both template-dependent and template-independent (terminal transferase) DNA polymerase activities. Also has a 5'-deoxyribose-5-phosphate lyase (dRP lyase) activity. This is DNA polymerase lambda from Macaca fascicularis (Crab-eating macaque).